We begin with the raw amino-acid sequence, 298 residues long: Protein REVEILLE 8 (298 aa).

The disordered stretch occupies residues 1 to 44 (MSSSPSRNPTNAEAPPPPPTSTDAVAEGSSKKVRKPYTITKSRE). The 55-residue stretch at 38 to 92 (TITKSRESWTEEEHDKFLEALQLFDRDWKKIEDFVGSKTVIQIRSHAQKYFLKVQ) folds into the HTH myb-type domain. A DNA-binding region (H-T-H motif) is located at residues 65-88 (WKKIEDFVGSKTVIQIRSHAQKYF). The disordered stretch occupies residues 96-123 (TLAHVPPPRPKRKAAHPYPQKASKNAQM).

The protein resides in the nucleus. Functionally, transcriptional activator of evening element (EE)-containing clock-controlled genes. Forms a negative feedback loop with APRR5. Regulates the pattern of histone H3 acetylation of the TOC1 promoter. RVE4, RVE6 and RVE8 are components of the circadian system acting synergistically to regulate flowering time, redundantly to regulate leaf growth, and antagonistically to regulate hypocotyl elongation; their action seems independent of ZTL and HY5. This chain is Protein REVEILLE 8, found in Arabidopsis thaliana (Mouse-ear cress).